Consider the following 932-residue polypeptide: UPF0182 protein Syncc9902_1151 (932 aa).

A run of 9 helical transmembrane segments spans residues 4–24 (FLWI…VEWV), 40–60 (MLQL…VLWL), 85–105 (VLMV…DLAI), 124–144 (MASE…VSLC), 151–171 (WVAV…WGVW), 201–221 (IQLG…HAVW), 243–263 (YRWL…LVWL), 293–313 (LLAF…IGHL), and 315–335 (RLLL…TPLT).

Belongs to the UPF0182 family.

It is found in the cell membrane. This chain is UPF0182 protein Syncc9902_1151, found in Synechococcus sp. (strain CC9902).